The following is a 196-amino-acid chain: MIASVRGEVLEVALDHVVIEAAGVGYRVNATPATLATLRQGTEARLITAMIVREDSMTLYGFPDGETRDLFLTLLSVSGVGPRLAMAALAVHDAPALRQVLADGNVAALTRVPGIGKRGAERMVLELRDKVGVAATGGALSTNGHAVRSPVVEALVGLGFAAKQAEEATDTVLAANHDATTSSALRSALSLLGKAR.

The domain I stretch occupies residues 1 to 63 (MIASVRGEVL…EDSMTLYGFP (63 aa)). Residues 64–138 (DGETRDLFLT…DKVGVAATGG (75 aa)) form a domain II region. The segment at 138–142 (GALST) is flexible linker. Residues 143–196 (NGHAVRSPVVEALVGLGFAAKQAEEATDTVLAANHDATTSSALRSALSLLGKAR) form a domain III region.

Belongs to the RuvA family. As to quaternary structure, homotetramer. Forms an RuvA(8)-RuvB(12)-Holliday junction (HJ) complex. HJ DNA is sandwiched between 2 RuvA tetramers; dsDNA enters through RuvA and exits via RuvB. An RuvB hexamer assembles on each DNA strand where it exits the tetramer. Each RuvB hexamer is contacted by two RuvA subunits (via domain III) on 2 adjacent RuvB subunits; this complex drives branch migration. In the full resolvosome a probable DNA-RuvA(4)-RuvB(12)-RuvC(2) complex forms which resolves the HJ.

The protein resides in the cytoplasm. In terms of biological role, the RuvA-RuvB-RuvC complex processes Holliday junction (HJ) DNA during genetic recombination and DNA repair, while the RuvA-RuvB complex plays an important role in the rescue of blocked DNA replication forks via replication fork reversal (RFR). RuvA specifically binds to HJ cruciform DNA, conferring on it an open structure. The RuvB hexamer acts as an ATP-dependent pump, pulling dsDNA into and through the RuvAB complex. HJ branch migration allows RuvC to scan DNA until it finds its consensus sequence, where it cleaves and resolves the cruciform DNA. This chain is Holliday junction branch migration complex subunit RuvA, found in Mycobacterium bovis (strain ATCC BAA-935 / AF2122/97).